The sequence spans 510 residues: Probable ADP-ribosylation factor-binding protein C1F3.05 (510 aa).

One can recognise a VHS domain in the interval 14-150 (ATDQFNLEPN…LMAFRGYKFP (137 aa)). One can recognise a GAT domain in the interval 177–301 (LEAHKAKLQE…VIEECSNSDL (125 aa)). One can recognise a GAE domain in the interval 391 to 510 (TNSSLTSILQ…VEQGESHLPL (120 aa)).

Its subcellular location is the golgi apparatus. It localises to the trans-Golgi network. May play a role in the regulation of membrane traffic through the trans-Golgi network. The sequence is that of Probable ADP-ribosylation factor-binding protein C1F3.05 from Schizosaccharomyces pombe (strain 972 / ATCC 24843) (Fission yeast).